Reading from the N-terminus, the 171-residue chain is Small ribosomal subunit protein uS5 (171 aa).

The S5 DRBM domain maps to 12-75 (LKEKLISVNR…EKARRNMIQV (64 aa)).

This sequence belongs to the universal ribosomal protein uS5 family. As to quaternary structure, part of the 30S ribosomal subunit. Contacts proteins S4 and S8.

Its function is as follows. With S4 and S12 plays an important role in translational accuracy. Located at the back of the 30S subunit body where it stabilizes the conformation of the head with respect to the body. The sequence is that of Small ribosomal subunit protein uS5 from Buchnera aphidicola subsp. Baizongia pistaciae (strain Bp).